We begin with the raw amino-acid sequence, 149 residues long: 3-dehydroquinate dehydratase 2 (149 aa).

Tyr24 serves as the catalytic Proton acceptor. Residues Asn75, His81, and Asp88 each contribute to the substrate site. The active-site Proton donor is the His101. Substrate is bound by residues 102-103 (LS) and Arg112.

The protein belongs to the type-II 3-dehydroquinase family. Homododecamer.

It carries out the reaction 3-dehydroquinate = 3-dehydroshikimate + H2O. It participates in metabolic intermediate biosynthesis; chorismate biosynthesis; chorismate from D-erythrose 4-phosphate and phosphoenolpyruvate: step 3/7. In terms of biological role, catalyzes a trans-dehydration via an enolate intermediate. This chain is 3-dehydroquinate dehydratase 2 (aroQ2), found in Pseudomonas putida (strain ATCC 47054 / DSM 6125 / CFBP 8728 / NCIMB 11950 / KT2440).